The sequence spans 188 residues: mRNA transport factor GFD1 (188 aa).

A disordered region spans residues 1 to 128 (MPLESIWADA…KTQSKQDTAS (128 aa)). Positions 18 to 28 (KQKPSHKRSNN) are enriched in basic residues. Residues 29–44 (NKKNNNSRWSNESSSN) show a composition bias toward low complexity. The segment covering 59–79 (GNHESKTKNKIKETLPREKKP) has biased composition (basic and acidic residues). Phosphoserine occurs at positions 87, 106, and 111. A compositionally biased stretch (low complexity) spans 112 to 128 (PSKMKTTKTQSKQDTAS). Residues 119 to 164 (KTQSKQDTASKMKLLKKKIEEQREILQKTHHKNQQQQVLMDFLNDE) adopt a coiled-coil conformation.

As to quaternary structure, interacts with GLE1, NUP42, NAB2, ZDS1 and probably DBP5. Forms a complex with GLE1 and NAB2.

The protein resides in the cytoplasm. It is found in the nucleus. It localises to the nuclear pore complex. The protein localises to the nucleus membrane. Functionally, high-copy suppressor of mutant alleles of ATP-dependent RNA helicase DBP5, which is involved in mRNA export from the nucleus. It may also play an important role in a late stage of NAB2-mRNA export. In Saccharomyces cerevisiae (strain ATCC 204508 / S288c) (Baker's yeast), this protein is mRNA transport factor GFD1 (GFD1).